Here is a 323-residue protein sequence, read N- to C-terminus: tRNA dimethylallyltransferase (323 aa).

Gly18–Ser25 contributes to the ATP binding site. Substrate is bound at residue Thr20 to Ser25. Interaction with substrate tRNA regions lie at residues Asp43–Gln46, Gln167–Arg171, and Arg249–Arg254.

It belongs to the IPP transferase family. Monomer. It depends on Mg(2+) as a cofactor.

The catalysed reaction is adenosine(37) in tRNA + dimethylallyl diphosphate = N(6)-dimethylallyladenosine(37) in tRNA + diphosphate. Functionally, catalyzes the transfer of a dimethylallyl group onto the adenine at position 37 in tRNAs that read codons beginning with uridine, leading to the formation of N6-(dimethylallyl)adenosine (i(6)A). This Nitrosospira multiformis (strain ATCC 25196 / NCIMB 11849 / C 71) protein is tRNA dimethylallyltransferase.